The following is a 640-amino-acid chain: Chitin elicitor receptor kinase 1 (640 aa).

An N-terminal signal peptide occupies residues M1–Q31. Residues R32–G248 lie on the Extracellular side of the membrane. 3 disulfide bridges follow: C43-C104, C49-C166, and C102-C164. LysM domains are found at residues A53–L98, F113–I160, and S179–N227. Residues T119–K125 and D148–S154 contribute to the chitin site. The chain crosses the membrane as a helical span at residues I249 to I269. Over F270–L640 the chain is Cytoplasmic. The segment at M286 to T308 is disordered. Positions S289–S307 are enriched in low complexity. A Protein kinase domain is found at F330 to L612. ATP-binding positions include I336 to V344 and K357. Residue D452 is the Proton acceptor of the active site.

It belongs to the protein kinase superfamily. Ser/Thr protein kinase family.

It is found in the cell membrane. The catalysed reaction is L-seryl-[protein] + ATP = O-phospho-L-seryl-[protein] + ADP + H(+). The enzyme catalyses L-threonyl-[protein] + ATP = O-phospho-L-threonyl-[protein] + ADP + H(+). Functionally, lysin motif (LysM) receptor kinase required as a cell surface receptor for chitin elicitor (chitooligosaccharides) signaling leading to innate immunity in response to biotic stresses. The CERK1, MEKK1a/b, MKK1a/b/c and MPK4a/b proteins are involved in pathogen defense. The pathway induces rapid growth inhibition, cell wall depositions and accumulation of defense-related transcripts. This protein is required for response to chitin. Is able to complement the A.thaliana cerk1 mutant. This chain is Chitin elicitor receptor kinase 1, found in Physcomitrium patens (Spreading-leaved earth moss).